The chain runs to 297 residues: MPQAADIATAPQRPSAPGDVVAAGQPPRARGRAHVSSKRRDDGAVALDTLHQSGALKLLFPTGRPDLEAVTVNTAGGITGGDDFALTAKAGAQSQLTLTTQAAERVYRAQPHQTGQMTTRLSVEPQARLRWVPQETILFQHSAFRRSLHVELADDAELLLVEPLVFGRVAMGEHLSALRFHDQIQIRRAGRILFRDAIRLDGDAMAQLKRPGIAGVLSGPCTAMVTLVLASPGAEAALAWLRTQLPAGKEAYGGASLLAPNLLHMRLLARDSFVLRQSLLPILDKLTEGSLPRCWRL.

Positions 1–41 (MPQAADIATAPQRPSAPGDVVAAGQPPRARGRAHVSSKRRD) are disordered.

The protein belongs to the UreD family. As to quaternary structure, ureD, UreF and UreG form a complex that acts as a GTP-hydrolysis-dependent molecular chaperone, activating the urease apoprotein by helping to assemble the nickel containing metallocenter of UreC. The UreE protein probably delivers the nickel.

Its subcellular location is the cytoplasm. Required for maturation of urease via the functional incorporation of the urease nickel metallocenter. The protein is Urease accessory protein UreD of Ruegeria sp. (strain TM1040) (Silicibacter sp.).